Here is a 234-residue protein sequence, read N- to C-terminus: Inosine triphosphate pyrophosphatase (234 aa).

Residue 11–16 participates in ITP binding; sequence SGNKGK. A Mg(2+)-binding site is contributed by glutamate 40. Residues lysine 53, 81–82, lysine 98, 176–179, lysine 203, and 208–209 each bind ITP; these read DT, FGWD, and HR.

Belongs to the HAM1 NTPase family. In terms of assembly, homodimer. Mg(2+) serves as cofactor. Mn(2+) is required as a cofactor.

Its subcellular location is the cytoplasm. The catalysed reaction is ITP + H2O = IMP + diphosphate + H(+). The enzyme catalyses dITP + H2O = dIMP + diphosphate + H(+). It carries out the reaction XTP + H2O = XMP + diphosphate + H(+). Functionally, pyrophosphatase that hydrolyzes non-canonical purine nucleotides such as inosine triphosphate (ITP), deoxyinosine triphosphate (dITP) or xanthosine 5'-triphosphate (XTP) to their respective monophosphate derivatives. The enzyme does not distinguish between the deoxy- and ribose forms. Probably excludes non-canonical purines from RNA and DNA precursor pools, thus preventing their incorporation into RNA and DNA and avoiding chromosomal lesions. The protein is Inosine triphosphate pyrophosphatase of Leishmania major.